The following is a 181-amino-acid chain: Large ribosomal subunit protein uL6 (181 aa).

Belongs to the universal ribosomal protein uL6 family. As to quaternary structure, part of the 50S ribosomal subunit.

In terms of biological role, this protein binds to the 23S rRNA, and is important in its secondary structure. It is located near the subunit interface in the base of the L7/L12 stalk, and near the tRNA binding site of the peptidyltransferase center. This Coprothermobacter proteolyticus (strain ATCC 35245 / DSM 5265 / OCM 4 / BT) protein is Large ribosomal subunit protein uL6.